A 355-amino-acid polypeptide reads, in one-letter code: Putative cyclin-A3-1 (355 aa).

The protein belongs to the cyclin family. Cyclin AB subfamily.

This is Putative cyclin-A3-1 (CYCA3-1) from Arabidopsis thaliana (Mouse-ear cress).